The sequence spans 324 residues: Testisin (324 aa).

An N-terminal signal peptide occupies residues 1–21 (MGARGKTLVPLLVVVATAAMA). Positions 22 to 54 (LQSTYLQVDPEKPELQEPDLLSGPCGHRTIPSR) are excised as a propeptide. Intrachain disulfides connect C46–C167 and C80–C96. The 242-residue stretch at 55 to 296 (IVGGDDAELG…HYNWIQSTMI (242 aa)) folds into the Peptidase S1 domain. Residues H95 and D147 each act as charge relay system in the active site. Residues N170, N177, and N210 are each glycosylated (N-linked (GlcNAc...) asparagine). 3 disulfides stabilise this stretch: C181–C254, C214–C233, and C244–C272. S248 serves as the catalytic Charge relay system. Residue N283 is glycosylated (N-linked (GlcNAc...) asparagine). N298 is lipidated: GPI-anchor amidated asparagine. Residues 299–324 (GLLRPDPVPLLLFLTLAWASSLLRPA) constitute a propeptide, removed in mature form.

The protein belongs to the peptidase S1 family. Testis.

The protein localises to the cell membrane. Functionally, could regulate proteolytic events associated with testicular germ cell maturation. In Mus musculus (Mouse), this protein is Testisin (Prss21).